We begin with the raw amino-acid sequence, 87 residues long: Small ribosomal subunit protein eS21 (87 aa).

Belongs to the eukaryotic ribosomal protein eS21 family. Component of the small ribosomal subunit. Mature ribosomes consist of a small (40S) and a large (60S) subunit. The 40S subunit contains about 33 different proteins and 1 molecule of RNA (18S). The 60S subunit contains about 49 different proteins and 3 molecules of RNA (25S, 5.8S and 5S).

The protein localises to the cytoplasm. Required for the processing of the 20S rRNA-precursor to mature 18S rRNA in a late step of the maturation of 40S ribosomal subunits. Has a physiological role leading to 18S rRNA stability. This is Small ribosomal subunit protein eS21 (RPS21) from Kluyveromyces lactis (strain ATCC 8585 / CBS 2359 / DSM 70799 / NBRC 1267 / NRRL Y-1140 / WM37) (Yeast).